Here is a 232-residue protein sequence, read N- to C-terminus: Ubiquinone biosynthesis O-methyltransferase (232 aa).

Positions 36, 55, 76, and 120 each coordinate S-adenosyl-L-methionine.

It belongs to the methyltransferase superfamily. UbiG/COQ3 family.

The enzyme catalyses a 3-demethylubiquinol + S-adenosyl-L-methionine = a ubiquinol + S-adenosyl-L-homocysteine + H(+). It catalyses the reaction a 3-(all-trans-polyprenyl)benzene-1,2-diol + S-adenosyl-L-methionine = a 2-methoxy-6-(all-trans-polyprenyl)phenol + S-adenosyl-L-homocysteine + H(+). The protein operates within cofactor biosynthesis; ubiquinone biosynthesis. Functionally, O-methyltransferase that catalyzes the 2 O-methylation steps in the ubiquinone biosynthetic pathway. The polypeptide is Ubiquinone biosynthesis O-methyltransferase (Chromobacterium violaceum (strain ATCC 12472 / DSM 30191 / JCM 1249 / CCUG 213 / NBRC 12614 / NCIMB 9131 / NCTC 9757 / MK)).